We begin with the raw amino-acid sequence, 718 residues long: Ribosomal RNA large subunit methyltransferase K/L (718 aa).

One can recognise a THUMP domain in the interval 43-154; sequence TQYRILLWSR…QDELVVSLDL (112 aa).

This sequence belongs to the methyltransferase superfamily. RlmKL family.

Its subcellular location is the cytoplasm. The catalysed reaction is guanosine(2445) in 23S rRNA + S-adenosyl-L-methionine = N(2)-methylguanosine(2445) in 23S rRNA + S-adenosyl-L-homocysteine + H(+). The enzyme catalyses guanosine(2069) in 23S rRNA + S-adenosyl-L-methionine = N(2)-methylguanosine(2069) in 23S rRNA + S-adenosyl-L-homocysteine + H(+). Its function is as follows. Specifically methylates the guanine in position 2445 (m2G2445) and the guanine in position 2069 (m7G2069) of 23S rRNA. The protein is Ribosomal RNA large subunit methyltransferase K/L of Histophilus somni (strain 2336) (Haemophilus somnus).